A 296-amino-acid polypeptide reads, in one-letter code: 33 kDa chaperonin (296 aa).

2 cysteine pairs are disulfide-bonded: Cys238/Cys240 and Cys271/Cys274.

Belongs to the HSP33 family. Post-translationally, under oxidizing conditions two disulfide bonds are formed involving the reactive cysteines. Under reducing conditions zinc is bound to the reactive cysteines and the protein is inactive.

Its subcellular location is the cytoplasm. Functionally, redox regulated molecular chaperone. Protects both thermally unfolding and oxidatively damaged proteins from irreversible aggregation. Plays an important role in the bacterial defense system toward oxidative stress. This chain is 33 kDa chaperonin, found in Clostridium botulinum (strain 657 / Type Ba4).